The chain runs to 338 residues: Anthocyanidin reductase ((2S)-flavan-3-ol-forming) (338 aa).

NADP(+) contacts are provided by residues 18-21, Lys-48, 87-90, and Tyr-168; these read TGFV and VATP.

It belongs to the NAD(P)-dependent epimerase/dehydratase family. Dihydroflavonol-4-reductase subfamily. As to expression, expressed in seeds, grape skins, flowers and leaves.

It catalyses the reaction a (2S,3R)-flavan-3-ol + 2 NADP(+) = an anthocyanidin with a 3-hydroxy group + 2 NADPH + 2 H(+). The catalysed reaction is a (2S,3S)-flavan-3-ol + 2 NADP(+) = an anthocyanidin with a 3-hydroxy group + 2 NADPH + 2 H(+). It participates in secondary metabolite biosynthesis; flavonoid biosynthesis. With respect to regulation, inhibited at NaCl concentrations higher than 200 mM. Produces the terminal flavan-3-ol monomers required for the formation of proanthocyanidins or condensed tannins in leaves and flowers, as well as in the skin and seeds of developing berries. Behaves as a reductase and as a C-3 epimerase. Catalyzes the double reduction of anthocyanidins, producing a mixture of (2S,3S)- and (2S,3R)-flavan-3-ols. The enzyme catalyzes sequential hydride transfers to C-2 and C-4, respectively and epimerization at C-3 is achieved by tautomerization that occurs between the two hydride transfers. Converts cyanidin, pelargonidin and delphinidin into catechin and epicatechin, afzelechin and epiafzelechin, and gallocatechin and epigallocatechin respectively. The chain is Anthocyanidin reductase ((2S)-flavan-3-ol-forming) from Vitis vinifera (Grape).